Here is a 201-residue protein sequence, read N- to C-terminus: Large ribosomal subunit protein uL4 (201 aa).

The disordered stretch occupies residues 44–71 (RAQKTRAEVTGSGKKPWRQKGTGRARSG).

Belongs to the universal ribosomal protein uL4 family. As to quaternary structure, part of the 50S ribosomal subunit.

Functionally, one of the primary rRNA binding proteins, this protein initially binds near the 5'-end of the 23S rRNA. It is important during the early stages of 50S assembly. It makes multiple contacts with different domains of the 23S rRNA in the assembled 50S subunit and ribosome. Forms part of the polypeptide exit tunnel. In Shigella flexneri serotype 5b (strain 8401), this protein is Large ribosomal subunit protein uL4.